A 1164-amino-acid polypeptide reads, in one-letter code: MKKNTDSEMDQRLGYKFLVPDPKAGVFYRPLHFQYVSYSNFILHRLHEILTVKRPLLSFKNNTERIMIEISNVKVTPPDYSPIIASIKGKSYDALATFTVNIFKEVMTKEGISITKISSYEGKDSHLIKIPLLIGYGNKNPLDTAKYLVPNVIGGVFINKQSVEKVGINLVEKITTWPKFRVVKPNSFTFSFSSVSPPNVLPTRYRHYKISLDISQLEASNISSTKTFITVNIVLLSQYLSRVSLEFIRRSLSYDMPPEVVYLVNAIIDSAKRITESITDFNIDTYINDLVEAEHIKQKSQLTINEFKYEMLHNFLPHMNYTPDQLKGFYMISLLRKFLYCIYHTSRYPDRDSMVCHRILTYGKYFETLAHDELENYIGNIRNDIMNNHKNRGTYAVNIHVLTTPGLNHAFSSLLSGKFKKSDGSYRTHPHYSWMQNISIPRSVGFYPDQVKISKMFSVRKYHPSQYLYFCSSDVPERGPQVGLVSQLSVLSSITNILTSEYLDLEKKICEYIRSYYKDDISYFETGFPITIENALVASLNPNMICDFVTDFRRRKRMGFFGNLEVGITLVRDHMNEIRINIGAGRLVRPFLVVDNGELMMDVCPELESRLDDMTFSDIQKEFPHVIEMVDIEQFTFSNVCESVQKFRMMSKDERKQYDLCDFPAEFRDGYVASSLVGINHNSGPRAILGCAQAKQAISCLSSDIRNKIDNGIHLMYPERPIVISKALETSKIAANCFGQHVTIALMSYKGINQEDGIIIKKQFIQRGGLDIVTAKKHQVEIPLENFNNKERDRSNAYSKLESNGLVRLNAFLESGDAMARNISSRTLEDDFARDNQISFDVSEKYTDMYKSRVERVQVELTDKVKVRVLTMKERRPILGDKFTTRTSQKGTVAYIADETELPYDENGITPDVIINSTSIFSRKTISMLIEVILTAAYSAKPYNNKGENRPVCFPSSNETSIDTYMQFAKQCYEHSNPKLSDEELSDKIFCEKILYDPETDKPYTSKVFFGPIYYLRLRHLTQDKATVRCRGKKTKLIRQANEGRKRGGGIKFGEMERDCLIAHGAANTITEVLKDSEEDYQDVYICENCGDIAAQIKSINTCLRCSKLNLSPLLTKIDTTHVSKVFLTQMNARGVKVKLDFERRPPSFYKPLDKVDLKPSFLV.

It belongs to the RNA polymerase beta chain family. The DNA-dependent RNA polymerase used for intermediate and late genes expression consists of eight subunits (147) kDa, (133) kDa, (35) kDa, (30) kDa, (22) kDa, (19) kDa, (18) kDa and (7) kDa totalling more than 500 kDa in mass. The same holoenzyme, with the addition of the transcription-specificity factor RAP94, is used for early gene expression.

The protein resides in the virion. The catalysed reaction is RNA(n) + a ribonucleoside 5'-triphosphate = RNA(n+1) + diphosphate. In terms of biological role, part of the DNA-dependent RNA polymerase which catalyzes the transcription of viral DNA into RNA using the four ribonucleoside triphosphates as substrates. Responsible for the transcription of early, intermediate and late genes. DNA-dependent RNA polymerase associates with the early transcription factor (ETF), itself composed of D6 and A7, thereby allowing the early genes transcription. Late transcription, and probably also intermediate transcription, require newly synthesized RNA polymerase. The sequence is that of DNA-directed RNA polymerase 132 kDa polypeptide (RPO132) from Cowpox virus (strain GRI-90 / Grishak) (CPV).